The following is a 275-amino-acid chain: Voltage-dependent calcium channel gamma-5 subunit (275 aa).

Helical transmembrane passes span 8–28 (ALTL…GIAV), 103–123 (FPLV…IGHI), 129–149 (ILAF…VVGL), and 176–196 (GWSF…GVMS).

Belongs to the PMP-22/EMP/MP20 family. CACNG subfamily. In terms of assembly, the L-type calcium channel is composed of five subunits: alpha-1, alpha-2/delta, beta and gamma. Acts as an auxiliary subunit for AMPA-selective glutamate receptors (AMPARs). Found in a complex with GRIA1, GRIA2, GRIA3, GRIA4, CNIH2, CNIH3, CACNG2, CACNG3, CACNG4, CACNG7 and CACNG8. Interacts with GRIA1, GRIA2, GRIA3 and GRIA4.

It is found in the membrane. It localises to the postsynaptic density membrane. Its function is as follows. Regulates the gating properties of AMPA-selective glutamate receptors (AMPARs). Modulates their gating properties by accelerating their rates of activation, deactivation and desensitization. Displays subunit-specific AMPA receptor regulation. Shows specificity for GRIA1, GRIA4 and the long isoform of GRIA2. Thought to stabilize the calcium channel in an inactivated (closed) state. The polypeptide is Voltage-dependent calcium channel gamma-5 subunit (CACNG5) (Homo sapiens (Human)).